The following is a 283-amino-acid chain: uncharacterized protein (283 aa).

A run of 4 helical transmembrane segments spans residues 11-31, 35-55, 56-76, and 93-113; these read LFAY…YVSA, EGAL…WFGP, IYAL…MMFF, and LVVW…IHDI. Residues 162–283 form the GGDEF domain; that stretch reads NSFVFLLLHM…LENEMMMNEL (122 aa).

The protein resides in the cell membrane. This is an uncharacterized protein from Bacillus subtilis (strain 168).